The following is a 340-amino-acid chain: Ferrochelatase (340 aa).

Residues H189 and E292 each contribute to the Fe cation site.

Belongs to the ferrochelatase family.

It is found in the cytoplasm. It catalyses the reaction heme b + 2 H(+) = protoporphyrin IX + Fe(2+). The protein operates within porphyrin-containing compound metabolism; protoheme biosynthesis; protoheme from protoporphyrin-IX: step 1/1. Catalyzes the ferrous insertion into protoporphyrin IX. This is Ferrochelatase from Pseudomonas paraeruginosa (strain DSM 24068 / PA7) (Pseudomonas aeruginosa (strain PA7)).